Reading from the N-terminus, the 4115-residue chain is Transcription-associated protein 1 (4115 aa).

Positions 1-11 (MDPSIPSTSHR) are enriched in polar residues. 2 disordered regions span residues 1-21 (MDPSIPSTSHRSVPPDRGVQP) and 543-563 (ESEQKRNELPTPTKEHTKKTS). The span at 544-563 (SEQKRNELPTPTKEHTKKTS) shows a compositional bias: basic and acidic residues. TPR repeat units follow at residues 1341-1374 (LDGLQRFVFICPEGFEFEKDSEIYKRYLVHLLDL) and 1820-1853 (QDYDMFFNVVSVFMGKFQTDFTFVREYLEVEVIP). The interval 2678–2701 (LEEPEPMEVDQPKNAPAEEPKDNK) is disordered. Residues 2808-3421 (LIEFISSKHE…SNGASKVSKS (614 aa)) enclose the FAT domain. The stretch at 2855-2888 (IETLESLGALYKELAEFDQYSAIWERRSVFPETM) is one TPR 3 repeat. One can recognise a PI3K/PI4K catalytic domain in the interval 3740 to 4100 (EPYFEIVMRG…CNSLIIRAKD (361 aa)). Positions 3746–3752 (VMRGGQV) are G-loop. The interval 3959 to 3967 (NLSPMTPHQ) is catalytic loop. Positions 3979-4006 (NPFYRFELGTGQLMDIEHFAHEVPFRLT) are activation loop. The FATC domain maps to 4083-4115 (DAKVKKDDCNSLIIRAKDSDNLSRMPPTYHAWF).

Belongs to the PI3/PI4-kinase family. TRA1 subfamily.

It localises to the nucleus. Functionally, influences germ cell fate in hermaphrodites. Acts downstream of tra-2 and tra-3 and through the Tip60 histone acetyltransferase complex to regulate germ cell fate decisions. Required for spermatogenesis and embryonic development. Acts with tra-2 to promote expression of fog-3 and control male tail development. Involved in the negative regulation of vulval development. The polypeptide is Transcription-associated protein 1 (Caenorhabditis briggsae).